The primary structure comprises 143 residues: D-aminoacyl-tRNA deacylase (143 aa).

The Gly-cisPro motif, important for rejection of L-amino acids signature appears at 135 to 136 (GP).

It belongs to the DTD family. In terms of assembly, homodimer.

The protein localises to the cytoplasm. The catalysed reaction is glycyl-tRNA(Ala) + H2O = tRNA(Ala) + glycine + H(+). The enzyme catalyses a D-aminoacyl-tRNA + H2O = a tRNA + a D-alpha-amino acid + H(+). In terms of biological role, an aminoacyl-tRNA editing enzyme that deacylates mischarged D-aminoacyl-tRNAs. Also deacylates mischarged glycyl-tRNA(Ala), protecting cells against glycine mischarging by AlaRS. Acts via tRNA-based rather than protein-based catalysis; rejects L-amino acids rather than detecting D-amino acids in the active site. By recycling D-aminoacyl-tRNA to D-amino acids and free tRNA molecules, this enzyme counteracts the toxicity associated with the formation of D-aminoacyl-tRNA entities in vivo and helps enforce protein L-homochirality. The polypeptide is D-aminoacyl-tRNA deacylase (Mycobacterium avium (strain 104)).